Here is a 350-residue protein sequence, read N- to C-terminus: E3 ubiquitin-protein ligase TRIM63 (350 aa).

An RING-type zinc finger spans residues 23 to 79 (CPICLEMFTKPVVILPCQHNLCRKCANDIFQAANPYWTNRGGSVSMSGGRFRCPSCR). The segment at 74-218 (RCPSCRHEVI…LSQKFDTLYA (145 aa)) is interaction with TTN. A B box-type zinc finger spans residues 117–159 (GSHPMCKEHEDEKINIYCLTCEVPTCSLCKVFGAHQACEVAPL). The Zn(2+) site is built by C122, H125, C145, and H151. Positions 207–269 (EELSQKFDTL…VETAIQSLDE (63 aa)) form a coiled coil. Positions 267–325 (LDEPGGATFLSSAKQLIKSNVEASKGCQLGKTEQGFENMDYFTLDLEHIAEALRAIDFG) constitute a COS domain. Residues 325–344 (GTDEEEEEFTEEEADEEEGV) are compositionally biased toward acidic residues. Positions 325–350 (GTDEEEEEFTEEEADEEEGVTTEGHQ) are disordered.

As to quaternary structure, homodimer. Homooligomer and heterooligomer. Interacts with SUMO2, titin/TTN and GMEB1. Interacts with TRIM54 and probably with TRIM55. Interacts with TNNI3. Forms a ternary complex with RACK1 and PRKCE. Interacts with CKM.

The protein localises to the cytoplasm. It is found in the nucleus. Its subcellular location is the myofibril. It localises to the sarcomere. The protein resides in the m line. The protein localises to the z line. The enzyme catalyses S-ubiquitinyl-[E2 ubiquitin-conjugating enzyme]-L-cysteine + [acceptor protein]-L-lysine = [E2 ubiquitin-conjugating enzyme]-L-cysteine + N(6)-ubiquitinyl-[acceptor protein]-L-lysine.. It participates in protein modification; protein ubiquitination. In terms of biological role, E3 ubiquitin ligase. Mediates the ubiquitination and subsequent proteasomal degradation of CKM, GMEB1 and HIBADH. Regulates the proteasomal degradation of muscle proteins under amino acid starvation, where muscle protein is catabolized to provide other organs with amino acids. Inhibits de novo skeletal muscle protein synthesis under amino acid starvation. Regulates proteasomal degradation of cardiac troponin I/TNNI3 and probably of other sarcomeric-associated proteins. May play a role in striated muscle atrophy and hypertrophy by regulating an anti-hypertrophic PKC-mediated signaling pathway. May regulate the organization of myofibrils through TTN in muscle cells. This chain is E3 ubiquitin-protein ligase TRIM63 (Trim63), found in Mus musculus (Mouse).